A 513-amino-acid chain; its full sequence is Light-independent protochlorophyllide reductase subunit B (513 aa).

[4Fe-4S] cluster is bound at residue aspartate 36. The active-site Proton donor is the aspartate 299. Residue 434 to 435 coordinates substrate; that stretch reads GM.

This sequence belongs to the ChlB/BchB/BchZ family. As to quaternary structure, protochlorophyllide reductase is composed of three subunits; ChlL, ChlN and ChlB. Forms a heterotetramer of two ChlB and two ChlN subunits. Requires [4Fe-4S] cluster as cofactor.

The protein localises to the plastid. It localises to the chloroplast. It catalyses the reaction chlorophyllide a + oxidized 2[4Fe-4S]-[ferredoxin] + 2 ADP + 2 phosphate = protochlorophyllide a + reduced 2[4Fe-4S]-[ferredoxin] + 2 ATP + 2 H2O. Its pathway is porphyrin-containing compound metabolism; chlorophyll biosynthesis (light-independent). Component of the dark-operative protochlorophyllide reductase (DPOR) that uses Mg-ATP and reduced ferredoxin to reduce ring D of protochlorophyllide (Pchlide) to form chlorophyllide a (Chlide). This reaction is light-independent. The NB-protein (ChlN-ChlB) is the catalytic component of the complex. This is Light-independent protochlorophyllide reductase subunit B from Marchantia polymorpha (Common liverwort).